The sequence spans 428 residues: GTPase Obg (428 aa).

Residues M1–L158 form the Obg domain. An OBG-type G domain is found at A159–E329. Residues G165–S172, F190–V194, D212–G215, N282–D285, and S310–V312 each bind GTP. 2 residues coordinate Mg(2+): S172 and T192. Residues K350–D428 enclose the OCT domain.

It belongs to the TRAFAC class OBG-HflX-like GTPase superfamily. OBG GTPase family. Monomer. Mg(2+) is required as a cofactor.

It localises to the cytoplasm. In terms of biological role, an essential GTPase which binds GTP, GDP and possibly (p)ppGpp with moderate affinity, with high nucleotide exchange rates and a fairly low GTP hydrolysis rate. Plays a role in control of the cell cycle, stress response, ribosome biogenesis and in those bacteria that undergo differentiation, in morphogenesis control. The sequence is that of GTPase Obg from Bacillus cereus (strain Q1).